Consider the following 156-residue polypeptide: ATP synthase subunit b (156 aa).

The chain crosses the membrane as a helical span at residues 7–27; that stretch reads LFAQMIVFFVLWWVVARFVWP.

The protein belongs to the ATPase B chain family. As to quaternary structure, F-type ATPases have 2 components, F(1) - the catalytic core - and F(0) - the membrane proton channel. F(1) has five subunits: alpha(3), beta(3), gamma(1), delta(1), epsilon(1). F(0) has three main subunits: a(1), b(2) and c(10-14). The alpha and beta chains form an alternating ring which encloses part of the gamma chain. F(1) is attached to F(0) by a central stalk formed by the gamma and epsilon chains, while a peripheral stalk is formed by the delta and b chains.

Its subcellular location is the cell inner membrane. In terms of biological role, f(1)F(0) ATP synthase produces ATP from ADP in the presence of a proton or sodium gradient. F-type ATPases consist of two structural domains, F(1) containing the extramembraneous catalytic core and F(0) containing the membrane proton channel, linked together by a central stalk and a peripheral stalk. During catalysis, ATP synthesis in the catalytic domain of F(1) is coupled via a rotary mechanism of the central stalk subunits to proton translocation. Its function is as follows. Component of the F(0) channel, it forms part of the peripheral stalk, linking F(1) to F(0). This is ATP synthase subunit b from Polynucleobacter necessarius subsp. necessarius (strain STIR1).